Consider the following 192-residue polypeptide: Nucleoside triphosphate pyrophosphatase (192 aa).

Asp73 (proton acceptor) is an active-site residue.

This sequence belongs to the Maf family. A divalent metal cation is required as a cofactor.

The protein resides in the cytoplasm. The catalysed reaction is a ribonucleoside 5'-triphosphate + H2O = a ribonucleoside 5'-phosphate + diphosphate + H(+). It carries out the reaction a 2'-deoxyribonucleoside 5'-triphosphate + H2O = a 2'-deoxyribonucleoside 5'-phosphate + diphosphate + H(+). In terms of biological role, nucleoside triphosphate pyrophosphatase. May have a dual role in cell division arrest and in preventing the incorporation of modified nucleotides into cellular nucleic acids. The sequence is that of Nucleoside triphosphate pyrophosphatase from Ehrlichia canis (strain Jake).